The chain runs to 157 residues: S-ribosylhomocysteine lyase (157 aa).

His-54, His-58, and Cys-126 together coordinate Fe cation.

The protein belongs to the LuxS family. Homodimer. The cofactor is Fe cation.

It carries out the reaction S-(5-deoxy-D-ribos-5-yl)-L-homocysteine = (S)-4,5-dihydroxypentane-2,3-dione + L-homocysteine. Functionally, involved in the synthesis of autoinducer 2 (AI-2) which is secreted by bacteria and is used to communicate both the cell density and the metabolic potential of the environment. The regulation of gene expression in response to changes in cell density is called quorum sensing. Catalyzes the transformation of S-ribosylhomocysteine (RHC) to homocysteine (HC) and 4,5-dihydroxy-2,3-pentadione (DPD). This is S-ribosylhomocysteine lyase from Bacillus anthracis (strain A0248).